We begin with the raw amino-acid sequence, 264 residues long: MAATGEALTPQGYIQHHLTNLSVGEGFWTWHIDSLLFSVGLGVLFLWLFRSVGKKATTGVPGKLQCFVEMIIEFVDSSVKETFHGRNPVIAPLALTIFVWVFMMNFMDMVPVDWIPSLAAAAGIPYMKVVPTTDLNITFSMAIGVFLLIIYYSIKVKGISGFVKELTMQPFNHWAMIPVNFLLETVTLIAKPISLALRLFGNLYAGELIFILIALMYGANMALSALGVTLQLGWLIFHILVITLQAFIFMMLTIVYLSMAHEDH.

6 helical membrane-spanning segments follow: residues 29–49 (TWHI…LWLF), 89–109 (VIAP…FMDM), 134–154 (DLNI…YYSI), 177–197 (IPVN…SLAL), 208–228 (LIFI…ALGV), and 235–255 (LIFH…LTIV).

Belongs to the ATPase A chain family. In terms of assembly, F-type ATPases have 2 components, CF(1) - the catalytic core - and CF(0) - the membrane proton channel. CF(1) has five subunits: alpha(3), beta(3), gamma(1), delta(1), epsilon(1). CF(0) has three main subunits: a(1), b(2) and c(9-12). The alpha and beta chains form an alternating ring which encloses part of the gamma chain. CF(1) is attached to CF(0) by a central stalk formed by the gamma and epsilon chains, while a peripheral stalk is formed by the delta and b chains.

It localises to the cell inner membrane. Key component of the proton channel; it plays a direct role in the translocation of protons across the membrane. In Shewanella sediminis (strain HAW-EB3), this protein is ATP synthase subunit a.